A 398-amino-acid polypeptide reads, in one-letter code: tRNA(Ile)-lysidine synthase (398 aa).

17–22 is a binding site for ATP; that stretch reads SGGPDS.

It belongs to the tRNA(Ile)-lysidine synthase family.

Its subcellular location is the cytoplasm. The enzyme catalyses cytidine(34) in tRNA(Ile2) + L-lysine + ATP = lysidine(34) in tRNA(Ile2) + AMP + diphosphate + H(+). Ligates lysine onto the cytidine present at position 34 of the AUA codon-specific tRNA(Ile) that contains the anticodon CAU, in an ATP-dependent manner. Cytidine is converted to lysidine, thus changing the amino acid specificity of the tRNA from methionine to isoleucine. The sequence is that of tRNA(Ile)-lysidine synthase from Mesoplasma florum (strain ATCC 33453 / NBRC 100688 / NCTC 11704 / L1) (Acholeplasma florum).